Reading from the N-terminus, the 427-residue chain is Glutamyl-tRNA reductase (427 aa).

Residues 49 to 52 (TCNR), Ser-105, 110 to 112 (EPQ), and Gln-116 each bind substrate. The active-site Nucleophile is Cys-50. Residue 185-190 (AAGEMN) coordinates NADP(+).

The protein belongs to the glutamyl-tRNA reductase family. As to quaternary structure, homodimer.

It catalyses the reaction (S)-4-amino-5-oxopentanoate + tRNA(Glu) + NADP(+) = L-glutamyl-tRNA(Glu) + NADPH + H(+). It participates in porphyrin-containing compound metabolism; protoporphyrin-IX biosynthesis; 5-aminolevulinate from L-glutamyl-tRNA(Glu): step 1/2. Catalyzes the NADPH-dependent reduction of glutamyl-tRNA(Glu) to glutamate 1-semialdehyde (GSA). This Acinetobacter baumannii (strain AB307-0294) protein is Glutamyl-tRNA reductase.